We begin with the raw amino-acid sequence, 411 residues long: Ribose-phosphate pyrophosphokinase 3, chloroplastic (411 aa).

Residues 1–39 (MAAISPANATTAASLSLPQFSSTSSSLSSSSSPSFLNFK) constitute a chloroplast transit peptide. Mg(2+) contacts are provided by aspartate 231 and histidine 233. Positions 314–329 (GRHVVIVDDLVQSGGT) are binding of phosphoribosylpyrophosphate.

The protein belongs to the ribose-phosphate pyrophosphokinase family.

Its subcellular location is the plastid. The protein resides in the chloroplast. It catalyses the reaction D-ribose 5-phosphate + ATP = 5-phospho-alpha-D-ribose 1-diphosphate + AMP + H(+). In Arabidopsis thaliana (Mouse-ear cress), this protein is Ribose-phosphate pyrophosphokinase 3, chloroplastic (PRS3).